The following is a 249-amino-acid chain: Cilia- and flagella-associated protein 410 (249 aa).

3 LRR repeats span residues 19–40, 41–62, and 63–84; these read NVRK…REMP, SLEV…RSCR, and RLSE…FYLK. The LRRCT domain occupies 97-137; it reads NPCCGTSPHLYRMTVLRNLPHLQKLDNQAVTEEELTRALME. Residues 146 to 203 are disordered; that stretch reads HREGAGNGCPKPPYALNSVSSATETSQHLLSYTEETEVQGQTTTDQSPSFSPRDTMRS. Over residues 162–175 the composition is skewed to polar residues; sequence NSVSSATETSQHLL.

In terms of assembly, found in a complex with CFAP410, NEK1 and SPATA7. Interacts with NEK1. In terms of tissue distribution, expressed in the retina.

The protein resides in the cell projection. Its subcellular location is the cilium. It localises to the cytoplasm. It is found in the cytoskeleton. The protein localises to the cilium basal body. The protein resides in the mitochondrion. Its subcellular location is the photoreceptor outer segment. Plays a role in cilia formation and/or maintenance. Plays a role in the regulation of cell morphology and cytoskeletal organization. Involved in DNA damage repair. This is Cilia- and flagella-associated protein 410 from Mus musculus (Mouse).